The following is an 84-amino-acid chain: Putative membrane protein insertion efficiency factor (84 aa).

It belongs to the UPF0161 family.

Its subcellular location is the cell inner membrane. Functionally, could be involved in insertion of integral membrane proteins into the membrane. This is Putative membrane protein insertion efficiency factor from Shewanella baltica (strain OS195).